A 716-amino-acid chain; its full sequence is Protein C-mannosyl-transferase DPY19L3 (716 aa).

The Cytoplasmic segment spans residues 1-43 (MMSIRQRREIRATEVSEDFPAQEENVKLENKLPSGCTSRRLWK). Residues 44 to 64 (ILSLTIGGTIALCIGLLTSVY) form a helical membrane-spanning segment. At 65-154 (LATLHENDLW…RVLPVQKYLE (90 aa)) the chain is on the lumenal side. Residue asparagine 118 is glycosylated (N-linked (GlcNAc...) asparagine). A helical membrane pass occupies residues 155–182 (PVYFYIYTLFGLQAIYVTALYITSWLLS). The Cytoplasmic portion of the chain corresponds to 183 to 184 (GT). The name=3 intramembrane region spans 185–197 (WLSGLLAAFWYVT). The Cytoplasmic segment spans residues 198-215 (NRIDTTRVEFTIPLRENW). An intramembrane region (name=4) is located at residues 216–230 (ALPFFAIQIAAITYF). The Cytoplasmic portion of the chain corresponds to 231–239 (LRPNLQPLS). The chain crosses the membrane as a helical span at residues 240-256 (ERLTLLAIFISTFLFSL). The Lumenal portion of the chain corresponds to 257 to 262 (TWQFNQ). The helical transmembrane segment at 263–279 (FMMLMQALVLFTLDSLD) threads the bilayer. The Cytoplasmic portion of the chain corresponds to 280 to 289 (MLPAVKATWL). The chain crosses the membrane as a helical span at residues 290 to 306 (YGIQITSLLLVCILQFF). The Lumenal portion of the chain corresponds to 307-308 (NS). The chain crosses the membrane as a helical span at residues 309–323 (MILGSLLISFNLSVF). At 324–338 (IARKLQKNLKTGSFL) the chain is on the cytoplasmic side. The chain crosses the membrane as a helical span at residues 339-359 (NRLGKLLLHLFMVLCLTLFLN). The Lumenal segment spans residues 360–414 (NIIKKILNLKSDEHIFKFLKAKFGLGATRDFDANLYLCEEAFGLLPFNTFGRLSD). Residues 415–437 (TLLFYAYIFVLSITVIVAFVVAF) form a helical membrane-spanning segment. The Cytoplasmic portion of the chain corresponds to 438 to 465 (HNLSDSTNQQSVGKMEKGTVDLKPETAY). A helical membrane pass occupies residues 466-485 (NLIHTILFGFLALSTMRMKY). Over 486–487 (LW) the chain is Lumenal. Residues 488–499 (TSHMCVFASFGL) traverse the membrane as a helical segment. Residues 500-522 (CSPEIWELLLKSVHLYNPKRICI) lie on the Cytoplasmic side of the membrane. A helical transmembrane segment spans residues 523–539 (MRYSVPILILLYLCYKF). The Lumenal portion of the chain corresponds to 540-716 (WPGMMDELSE…FHVYKLSRNK (177 aa)). Asparagine 704 is a glycosylation site (N-linked (GlcNAc...) asparagine).

This sequence belongs to the dpy-19 family.

It localises to the endoplasmic reticulum membrane. The enzyme catalyses L-tryptophyl-[protein] + a di-trans,poly-cis-dolichyl beta-D-mannosyl phosphate = C-alpha-D-mannosyl-L-tryptophyl-[protein] + a di-trans,poly-cis-dolichyl phosphate + H(+). It functions in the pathway protein modification; protein glycosylation. C-mannosyltransferase that mediates C-mannosylation of tryptophan residues on target proteins. The reaction occurs on the luminal side of the endoplasmic reticulum and involves the transfer of a mannose unit from a dolichylphosphate mannose (Dol-P-Man) donor to an acceptor protein containing a WxxW or WxxC consensus sequence. C-mannosylates RSPO1, a Wnt signaling regulator, preferentially at the first Trp residue in the sequence WxxW. C-mannosylates the netrin receptor UNC5A, preferentially at the third tryptophan of WxxWxxWxxC sequence. In Pongo abelii (Sumatran orangutan), this protein is Protein C-mannosyl-transferase DPY19L3 (DPY19L3).